Consider the following 2096-residue polypeptide: Tudor domain-containing protein 6 (2096 aa).

Positions 65–120 constitute a Tudor 1 domain; that stretch reads ASASPGELCLVQVGLLWHRCRVVSRQAQESRVFLLDEGRTITAGAGSLAPGRREFF. Residues 287-316 are disordered; that stretch reads YRGSTGTGDENSTSATWEEREESPDKPGSP. Residues 288-302 show a composition bias toward polar residues; the sequence is RGSTGTGDENSTSAT. Thr293 bears the Phosphothreonine mark. Tudor domains lie at 310-369, 536-593, 816-875, 1033-1088, 1352-1411, and 1567-1626; these read PDKP…YFRM, KPEP…FRQL, HQRN…FLKV, PLNP…AYDV, PLQR…NAIL, and CPYI…ELLS. Residues Ser1722 and Ser2062 each carry the phosphoserine modification. One can recognise a Tudor 8 domain in the interval 2026–2084; that stretch reads AFTVGSKCVVWSSLRNTWSKCEILETAEEGTRVLNLSNGMEEIVNPENVWNGIPKLDKS.

Found in a mRNP complex (i.e. messenger ribonucleoproteins which correspond to mRNA with bound proteins), at least composed of TDRD1, TDRD6, TDRD7 and DDX4. Found in a complex, at least composed of PIWIL1, PIWIL2, DDX4 and TDRD6. Interacts with Tex19.1 and probably Tex19.2. Interacts with PRMT5. Interacts with SNRPB (when methylated); to trigger spliceosome formation. Post-translationally, undergoes proteolytic cleavage near the C-terminal by an unknown protease during the transition from meiosis I to meiosis II in primary spermatocytes.

Its subcellular location is the cytoplasm. In terms of biological role, tudor domain-containing protein involved in germ cell development, more specifically the formation of chromatoid body (during spermiogenesis), Balbiani body (during oogenesis), germ plasm (upon fertilization), and for proper miRNA expression and spliceosome maturation. Essential for RNA-dependent helicase UPF1 localization to chromatoid body, for UPF1-UPF2 and UPF1-DDX4 interactions which are required for mRNA degradation, using the extended 3' UTR-triggered nonsense-mediated mRNA decay (NMD) pathway. Involved in spliceosome maturation and mRNA splicing in prophase I spermatocytes through interaction with arginine N-methyltransferase PRMT5 and symmetrically arginine dimethylated SNRPB (small nuclear ribonucleoprotein-associated protein). The polypeptide is Tudor domain-containing protein 6 (Homo sapiens (Human)).